The chain runs to 513 residues: Calcium-binding mitochondrial carrier protein SCaMC-2 (513 aa).

Residues 1–233 (MARPRSLVSP…EKQTGMWWRH (233 aa)) lie on the Mitochondrial intermembrane side of the membrane. EF-hand domains are found at residues 55 to 90 (EHET…LGVH), 91 to 124 (RTEL…RDHE), 122 to 157 (DHEK…LGVN), and 158 to 193 (ISEQ…HPAE). Ca(2+) contacts are provided by aspartate 68, asparagine 70, aspartate 72, aspartate 79, aspartate 104, aspartate 106, aspartate 108, glutamine 110, and glutamate 115. Solcar repeat units follow at residues 228 to 314 (GMWW…MKRI), 322 to 407 (LGIH…LKNA), and 419 to 507 (PGVF…LKLT). The helical transmembrane segment at 234-251 (LVAGGGAGAVSRTCTAPL) threads the bilayer. The Mitochondrial matrix portion of the chain corresponds to 252–288 (DRLKVLMQVHASRSNNMSMLGGFTQMIREGGIRSLWR). The chain crosses the membrane as a helical span at residues 289-308 (GNGINVIKIAPESAIKFMAY). Residues 309 to 331 (EQMKRIIGSDQETLGIHERLVAG) are Mitochondrial intermembrane-facing. A helical membrane pass occupies residues 332–345 (SLAGVIAQSSIYPM). Over 346–381 (EVLKTRMALRKTGQYQGMLDCGKKILLKEGVSAFYK) the chain is Mitochondrial matrix. Residues 382-401 (GYVPNMLGIIPYAGIDLAVY) traverse the membrane as a helical segment. The Mitochondrial intermembrane segment spans residues 402–424 (ETLKNAWLQRYATSSADPGVFVL). The helical transmembrane segment at 425-442 (LACGTISSTCGQLASYPL) threads the bilayer. Residues 443–481 (ALVRTRMQAEASVEGAPQMTMSKLFKHIVKTEGAFGLYR) lie on the Mitochondrial matrix side of the membrane. Residues 482–501 (GLAPNFMKVIPAVSISYVVY) form a helical membrane-spanning segment. Topologically, residues 502 to 513 (ENLKLTLGVQSR) are mitochondrial intermembrane.

It belongs to the mitochondrial carrier (TC 2.A.29) family.

It is found in the mitochondrion inner membrane. Its function is as follows. Calcium-dependent mitochondrial solute carrier. The chain is Calcium-binding mitochondrial carrier protein SCaMC-2 (slc25a25) from Xenopus tropicalis (Western clawed frog).